Here is a 358-residue protein sequence, read N- to C-terminus: GMP reductase (358 aa).

NADP(+) is bound by residues 26–27, Lys-78, 130–132, and 181–182; these read SR, DVA, and IG. 3 residues coordinate K(+): Gly-182, Gly-184, and Cys-187. The active-site Thioimidate intermediate is Cys-187. Residue Thr-189 is the Proton donor/acceptor of the active site. Residue Arg-190 participates in K(+) binding. Residues 220–222, 243–244, 269–271, and 287–291 contribute to the GMP site; these read DGG, GG, GMS, and RASEG. Residues Met-270, 286–287, and 315–318 contribute to the NADP(+) site; these read YR and SACT.

Belongs to the IMPDH/GMPR family. GuaC type 1 subfamily. As to quaternary structure, homotetramer.

It carries out the reaction IMP + NH4(+) + NADP(+) = GMP + NADPH + 2 H(+). Functionally, catalyzes the irreversible NADPH-dependent deamination of GMP to IMP. It functions in the conversion of nucleobase, nucleoside and nucleotide derivatives of G to A nucleotides, and in maintaining the intracellular balance of A and G nucleotides. This chain is GMP reductase, found in Caenorhabditis elegans.